The primary structure comprises 323 residues: MKDKYGREIDYLRISLTDKCNLRCAYCMEKDHNDFIHNDKLMTLDEILRVVKECASIGIKKVRLTGGEPLVREGIVDLIKNINKIPEIEEICLTTNGILLGDKVKELSENGLKRVNISLDTLKEDRFKEITRIGTLDKVLYSIEKCLENNVKVKINTVILEDFNKDEILDLINLAYKNPIDLRFIELMPIGEGKKFKGVTNSEILEIIKKEKKVLSDGKTLRLNGPAKYISIEGFKGKIGFISAMSDCFCEDCNRIRVTPEGFMKQCLHWKYGINLRDKMRNGISDEELREIIKKSIYEKPEKHNFKMKEKDEDKRFMYEIGG.

In terms of domain architecture, Radical SAM core spans 4 to 233 (KYGREIDYLR…NGPAKYISIE (230 aa)). Arginine 13 lines the GTP pocket. 2 residues coordinate [4Fe-4S] cluster: cysteine 20 and cysteine 24. An S-adenosyl-L-methionine-binding site is contributed by tyrosine 26. Cysteine 27 is a [4Fe-4S] cluster binding site. Arginine 63 contributes to the GTP binding site. Glycine 67 lines the S-adenosyl-L-methionine pocket. A GTP-binding site is contributed by threonine 94. Position 118 (serine 118) interacts with S-adenosyl-L-methionine. Lysine 154 is a binding site for GTP. Methionine 188 is an S-adenosyl-L-methionine binding site. Positions 250 and 253 each coordinate [4Fe-4S] cluster. 255–257 (RIR) is a GTP binding site. Residue cysteine 267 coordinates [4Fe-4S] cluster.

The protein belongs to the radical SAM superfamily. MoaA family. As to quaternary structure, monomer and homodimer. [4Fe-4S] cluster serves as cofactor.

It catalyses the reaction GTP + AH2 + S-adenosyl-L-methionine = (8S)-3',8-cyclo-7,8-dihydroguanosine 5'-triphosphate + 5'-deoxyadenosine + L-methionine + A + H(+). It participates in cofactor biosynthesis; molybdopterin biosynthesis. In terms of biological role, catalyzes the cyclization of GTP to (8S)-3',8-cyclo-7,8-dihydroguanosine 5'-triphosphate. The protein is GTP 3',8-cyclase of Clostridium perfringens (strain SM101 / Type A).